Here is a 78-residue protein sequence, read N- to C-terminus: RNA-binding protein KhpA (78 aa).

Residues 29 to 78 enclose the KH domain; that stretch reads TIIYELTVAKPDIGKIIGKEGRTIKAIRTLLVSVASRNNVKVSLEIMEDK.

It belongs to the KhpA RNA-binding protein family.

The protein resides in the cytoplasm. Functionally, a probable RNA-binding protein. This Chlamydia caviae (strain ATCC VR-813 / DSM 19441 / 03DC25 / GPIC) (Chlamydophila caviae) protein is RNA-binding protein KhpA.